The chain runs to 315 residues: Putative quercetin 2,3-dioxygenase PA1205 (315 aa).

Residues histidine 77, histidine 79, histidine 121, and glutamate 123 each coordinate a divalent metal cation.

Belongs to the pirin family. It depends on a divalent metal cation as a cofactor.

The enzyme catalyses quercetin + O2 = 2-(3,4-dihydroxybenzoyloxy)-4,6-dihydroxybenzoate + CO. It participates in flavonoid metabolism; quercetin degradation. Putative quercetin 2,3-dioxygenase. This is Putative quercetin 2,3-dioxygenase PA1205 from Pseudomonas aeruginosa (strain ATCC 15692 / DSM 22644 / CIP 104116 / JCM 14847 / LMG 12228 / 1C / PRS 101 / PAO1).